The chain runs to 312 residues: Olfactory receptor 6C70 (312 aa).

Residues 1–22 (MKNHTRQIEFILLGLTDNSQLQ) are Extracellular-facing. N-linked (GlcNAc...) asparagine glycosylation occurs at asparagine 3. Residues 23 to 43 (IVIFLFLLLNCVLSMIGNFTI) form a helical membrane-spanning segment. At 44–63 (IALILLDSQLKTPMYFFLRN) the chain is on the cytoplasmic side. The helical transmembrane segment at 64-84 (FSFLEISFTTACIPRFLITIV) threads the bilayer. Residues 85–95 (TREKTISCNGC) are Extracellular-facing. A disulfide bridge connects residues cysteine 95 and cysteine 177. The chain crosses the membrane as a helical span at residues 96 to 116 (ISQLFFYIFLGVTEFFLLAAL). Residues 117 to 141 (SYDRYVAICKPLRYMSIMSNKVCYQ) are Cytoplasmic-facing. Residues 142–162 (LVFSSWVTGFLIIFTPLILGL) form a helical membrane-spanning segment. Residues 163–194 (NLDFCASNIIDHFICDISLILQLSCSDTHLLE) lie on the Extracellular side of the membrane. A helical transmembrane segment spans residues 195 to 215 (LIAFLLAVMTLIVTLFLVILS). Residues 216–237 (YSYIIKTILKFPSAQQKKKAFS) are Cytoplasmic-facing. Residues 238 to 258 (TCSSHMIVVSITYGSCMFIYI) traverse the membrane as a helical segment. Residues 259–272 (KPSANERVALSKGV) are Extracellular-facing. Residues 273–290 (TVLNTSVAPLLNPFIYTL) traverse the membrane as a helical segment. Topologically, residues 291-312 (RNQQVKQAFKAVFRKIFSASDK) are cytoplasmic.

The protein belongs to the G-protein coupled receptor 1 family.

Its subcellular location is the cell membrane. Odorant receptor. This Homo sapiens (Human) protein is Olfactory receptor 6C70 (OR6C70).